A 357-amino-acid polypeptide reads, in one-letter code: Sorbitol dehydrogenase (357 aa).

At Ala-2 the chain carries N-acetylalanine. Residue Cys-45 participates in Zn(2+) binding. Tyr-51 is a binding site for substrate. 2 residues coordinate Zn(2+): His-70 and Glu-71. Glu-156 serves as a coordination point for substrate. At Ser-169 the chain carries Phosphoserine. NAD(+) is bound by residues Val-184, Asp-204, Arg-209, 273-275 (VGM), and 297-299 (VFR). Residues Arg-299 and Tyr-300 each contribute to the substrate site.

It belongs to the zinc-containing alcohol dehydrogenase family. In terms of assembly, homotetramer. Requires Zn(2+) as cofactor. As to expression, testis has the highest level of expression, followed by kidney, liver, and lung. Low levels of expression are also observed in lens, brain, and skeletal muscle. Expressed in sperm flagellum and very low expression in the sperm head.

The protein localises to the mitochondrion membrane. The protein resides in the cell projection. It is found in the cilium. It localises to the flagellum. The catalysed reaction is keto-D-fructose + NADH + H(+) = D-sorbitol + NAD(+). It carries out the reaction xylitol + NAD(+) = D-xylulose + NADH + H(+). It catalyses the reaction L-iditol + NAD(+) = keto-L-sorbose + NADH + H(+). Inhibited in vitro by p-hydroxymercuribenzoate, EDTA, l,l0-phenanthroline and N-ethylmaleimide. Polyol dehydrogenase that catalyzes the reversible NAD(+)-dependent oxidation of various sugar alcohols. Is active with D-sorbitol (D-glucitol) leading to the C2-oxidized product D-fructose. Is a key enzyme in the polyol pathway that interconverts glucose and fructose via sorbitol, which constitutes an important alternate route for glucose metabolism. May play a role in sperm motility by using sorbitol as an alternative energy source for sperm motility and protein tyrosine phosphorylation. Has no activity on ethanol. Cannot use NADP(+) as the electron acceptor. This is Sorbitol dehydrogenase (Sord) from Mus musculus (Mouse).